A 45-amino-acid chain; its full sequence is Mu-conotoxin-like Cal 12.1.2a (45 aa).

4 disulfides stabilise this stretch: Cys3/Cys16, Cys11/Cys28, Cys18/Cys33, and Cys27/Cys39. 4-hydroxyproline is present on Pro23. Trp37 and Trp38 each carry 6'-bromotryptophan. Position 40 is a 4-hydroxyproline (Pro40). Trp44 is modified (6'-bromotryptophan).

In terms of tissue distribution, expressed by the venom duct.

It is found in the secreted. Its function is as follows. Mu-conotoxins block voltage-gated sodium channels. This toxin reversibly blocks voltage-gated sodium channel in cephalopods, with no alteration in the voltage dependence of sodium conductance or on the kinetics of inactivation. The polypeptide is Mu-conotoxin-like Cal 12.1.2a (Californiconus californicus (California cone)).